The sequence spans 249 residues: 5-oxoprolinase subunit A (249 aa).

Belongs to the LamB/PxpA family. In terms of assembly, forms a complex composed of PxpA, PxpB and PxpC.

The catalysed reaction is 5-oxo-L-proline + ATP + 2 H2O = L-glutamate + ADP + phosphate + H(+). In terms of biological role, catalyzes the cleavage of 5-oxoproline to form L-glutamate coupled to the hydrolysis of ATP to ADP and inorganic phosphate. This Limosilactobacillus fermentum (strain NBRC 3956 / LMG 18251) (Lactobacillus fermentum) protein is 5-oxoprolinase subunit A.